We begin with the raw amino-acid sequence, 301 residues long: UDP-N-acetylenolpyruvoylglucosamine reductase (301 aa).

The region spanning 30 to 194 (VGGEPDYLVF…LSAKFALAPG (165 aa)) is the FAD-binding PCMH-type domain. The active site involves Arg-173. Ser-223 serves as the catalytic Proton donor. Glu-293 is an active-site residue.

Belongs to the MurB family. The cofactor is FAD.

The protein resides in the cytoplasm. It carries out the reaction UDP-N-acetyl-alpha-D-muramate + NADP(+) = UDP-N-acetyl-3-O-(1-carboxyvinyl)-alpha-D-glucosamine + NADPH + H(+). Its pathway is cell wall biogenesis; peptidoglycan biosynthesis. Functionally, cell wall formation. The polypeptide is UDP-N-acetylenolpyruvoylglucosamine reductase (Streptococcus pneumoniae (strain CGSP14)).